The chain runs to 214 residues: Thymidylate kinase (214 aa).

Gly-10 to Ser-17 contributes to the ATP binding site.

Belongs to the thymidylate kinase family.

It catalyses the reaction dTMP + ATP = dTDP + ADP. In terms of biological role, phosphorylation of dTMP to form dTDP in both de novo and salvage pathways of dTTP synthesis. This Brucella abortus (strain S19) protein is Thymidylate kinase.